The primary structure comprises 339 residues: Fructose-1,6-bisphosphatase class 1 (339 aa).

Mg(2+)-binding residues include Glu-92, Asp-114, Leu-116, and Asp-117. Substrate contacts are provided by residues Asp-117–Ser-120, Asn-213, and Lys-279. Glu-285 serves as a coordination point for Mg(2+).

The protein belongs to the FBPase class 1 family. As to quaternary structure, homotetramer. Mg(2+) serves as cofactor.

Its subcellular location is the cytoplasm. The catalysed reaction is beta-D-fructose 1,6-bisphosphate + H2O = beta-D-fructose 6-phosphate + phosphate. It functions in the pathway carbohydrate biosynthesis; gluconeogenesis. This is Fructose-1,6-bisphosphatase class 1 from Acidovorax sp. (strain JS42).